A 435-amino-acid chain; its full sequence is 5-methylthioadenosine/S-adenosylhomocysteine deaminase (435 aa).

Zn(2+)-binding residues include H65 and H67. Substrate is bound by residues E94, R150, and H189. Zn(2+) is bound at residue H216. Positions 219 and 304 each coordinate substrate. D304 is a binding site for Zn(2+).

It belongs to the metallo-dependent hydrolases superfamily. MTA/SAH deaminase family. The cofactor is Zn(2+).

It carries out the reaction S-adenosyl-L-homocysteine + H2O + H(+) = S-inosyl-L-homocysteine + NH4(+). It catalyses the reaction S-methyl-5'-thioadenosine + H2O + H(+) = S-methyl-5'-thioinosine + NH4(+). Catalyzes the deamination of 5-methylthioadenosine and S-adenosyl-L-homocysteine into 5-methylthioinosine and S-inosyl-L-homocysteine, respectively. Is also able to deaminate adenosine. This Bacillus cereus (strain ATCC 14579 / DSM 31 / CCUG 7414 / JCM 2152 / NBRC 15305 / NCIMB 9373 / NCTC 2599 / NRRL B-3711) protein is 5-methylthioadenosine/S-adenosylhomocysteine deaminase.